A 258-amino-acid polypeptide reads, in one-letter code: tRNA pseudouridine synthase A (258 aa).

Catalysis depends on aspartate 52, which acts as the Nucleophile. A substrate-binding site is contributed by tyrosine 110.

It belongs to the tRNA pseudouridine synthase TruA family. As to quaternary structure, homodimer.

It catalyses the reaction uridine(38/39/40) in tRNA = pseudouridine(38/39/40) in tRNA. In terms of biological role, formation of pseudouridine at positions 38, 39 and 40 in the anticodon stem and loop of transfer RNAs. The chain is tRNA pseudouridine synthase A from Francisella philomiragia subsp. philomiragia (strain ATCC 25017 / CCUG 19701 / FSC 153 / O#319-036).